We begin with the raw amino-acid sequence, 408 residues long: Putative FBD-associated F-box protein At5g50270 (408 aa).

Positions 1–54 constitute an F-box domain; it reads MDRISGLPDELLLRVLSLLPNVKDVVVTMVLSKRWQFLWMMVPKLVYDDSYQNL. One can recognise an FBD domain in the interval 345-408; the sequence is PLRDDLSSVP…VNPDKKYEMI (64 aa).

This chain is Putative FBD-associated F-box protein At5g50270, found in Arabidopsis thaliana (Mouse-ear cress).